We begin with the raw amino-acid sequence, 357 residues long: UDP-N-acetylglucosamine--N-acetylmuramyl-(pentapeptide) pyrophosphoryl-undecaprenol N-acetylglucosamine transferase (357 aa).

UDP-N-acetyl-alpha-D-glucosamine-binding positions include 11 to 13, Asn123, Arg159, Ser187, Ile241, 260 to 265, and Gln286; these read TGG and ALTVAE.

The protein belongs to the glycosyltransferase 28 family. MurG subfamily.

Its subcellular location is the cell inner membrane. The catalysed reaction is di-trans,octa-cis-undecaprenyl diphospho-N-acetyl-alpha-D-muramoyl-L-alanyl-D-glutamyl-meso-2,6-diaminopimeloyl-D-alanyl-D-alanine + UDP-N-acetyl-alpha-D-glucosamine = di-trans,octa-cis-undecaprenyl diphospho-[N-acetyl-alpha-D-glucosaminyl-(1-&gt;4)]-N-acetyl-alpha-D-muramoyl-L-alanyl-D-glutamyl-meso-2,6-diaminopimeloyl-D-alanyl-D-alanine + UDP + H(+). It participates in cell wall biogenesis; peptidoglycan biosynthesis. Cell wall formation. Catalyzes the transfer of a GlcNAc subunit on undecaprenyl-pyrophosphoryl-MurNAc-pentapeptide (lipid intermediate I) to form undecaprenyl-pyrophosphoryl-MurNAc-(pentapeptide)GlcNAc (lipid intermediate II). The protein is UDP-N-acetylglucosamine--N-acetylmuramyl-(pentapeptide) pyrophosphoryl-undecaprenol N-acetylglucosamine transferase of Aromatoleum aromaticum (strain DSM 19018 / LMG 30748 / EbN1) (Azoarcus sp. (strain EbN1)).